We begin with the raw amino-acid sequence, 136 residues long: Large ribosomal subunit protein eL27 (136 aa).

Residues 5–40 (MKPGKVVMVLAGRYAGRKAVIVKNIDDGTADRPYSH) enclose the KOW domain.

The protein belongs to the eukaryotic ribosomal protein eL27 family. In terms of assembly, component of the large ribosomal subunit.

The protein resides in the cytoplasm. The protein localises to the cytosol. It is found in the rough endoplasmic reticulum. In terms of biological role, component of the large ribosomal subunit. In Danio rerio (Zebrafish), this protein is Large ribosomal subunit protein eL27 (rpl27).